A 331-amino-acid polypeptide reads, in one-letter code: Phenylalanine--tRNA ligase alpha subunit (331 aa).

E252 is a binding site for Mg(2+).

This sequence belongs to the class-II aminoacyl-tRNA synthetase family. Phe-tRNA synthetase alpha subunit type 1 subfamily. In terms of assembly, tetramer of two alpha and two beta subunits. Mg(2+) is required as a cofactor.

It localises to the cytoplasm. The enzyme catalyses tRNA(Phe) + L-phenylalanine + ATP = L-phenylalanyl-tRNA(Phe) + AMP + diphosphate + H(+). The polypeptide is Phenylalanine--tRNA ligase alpha subunit (Marinomonas sp. (strain MWYL1)).